Reading from the N-terminus, the 571-residue chain is Origin recognition complex subunit 5 (571 aa).

2 disordered regions span residues 90 to 142 and 404 to 430; these read DDEY…YDDD and QIYP…GRQL. 2 stretches are compositionally biased toward low complexity: residues 107 to 133 and 407 to 416; these read NNNN…NNND and PPQQVPQQQK. Basic and acidic residues predominate over residues 417–428; that stretch reads QQEKEKEKEKGR.

Belongs to the ORC1 family. ORC is composed of six subunits.

It is found in the nucleus. Component of the origin recognition complex (ORC) that binds origins of replication. DNA-binding is ATP-dependent, however specific DNA sequences that define origins of replication have not been identified so far. ORC is required to assemble the pre-replication complex necessary to initiate DNA replication. The sequence is that of Origin recognition complex subunit 5 (orcE) from Dictyostelium discoideum (Social amoeba).